A 575-amino-acid polypeptide reads, in one-letter code: Adenine deaminase 1 (575 aa).

Belongs to the metallo-dependent hydrolases superfamily. Adenine deaminase family. Mn(2+) is required as a cofactor.

The catalysed reaction is adenine + H2O + H(+) = hypoxanthine + NH4(+). This chain is Adenine deaminase 1, found in Agrobacterium fabrum (strain C58 / ATCC 33970) (Agrobacterium tumefaciens (strain C58)).